We begin with the raw amino-acid sequence, 220 residues long: Competence protein ComFC (220 aa).

It belongs to the ComF/GntX family. Monomer and dimer in solution. Interacts with ComFA and DprA; ComFA-ComFC form rings about 150 Angstroms in diameter with apparent 6-fold symmetry.

Functionally, involved in transformation (genetic competence for DNA uptake). This Streptococcus pneumoniae (strain ATCC BAA-255 / R6) protein is Competence protein ComFC.